Here is a 303-residue protein sequence, read N- to C-terminus: 5'-3' exonuclease (303 aa).

Positions 179–262 (ISPAQWVDVK…LATITTEIEA (84 aa)) constitute a 5'-3' exonuclease domain.

Functionally, 5'-3' exonuclease acting preferentially on double-stranded DNA. The chain is 5'-3' exonuclease from Halalkalibacterium halodurans (strain ATCC BAA-125 / DSM 18197 / FERM 7344 / JCM 9153 / C-125) (Bacillus halodurans).